The following is a 126-amino-acid chain: Glycine cleavage system H protein (126 aa).

The region spanning 22-104 is the Lipoyl-binding domain; it reads VAYVGITDYA…YGKGWLIKIS (83 aa). Lysine 63 is subject to N6-lipoyllysine.

It belongs to the GcvH family. The glycine cleavage system is composed of four proteins: P, T, L and H. The cofactor is (R)-lipoate.

Its function is as follows. The glycine cleavage system catalyzes the degradation of glycine. The H protein shuttles the methylamine group of glycine from the P protein to the T protein. In Parabacteroides distasonis (strain ATCC 8503 / DSM 20701 / CIP 104284 / JCM 5825 / NCTC 11152), this protein is Glycine cleavage system H protein.